The primary structure comprises 156 residues: MSRRSTAEKETAKSDPIYRNRLVNMLVNRILRHGKKSLAYRILYRAMKNIQQKTEKNPLSVLRQAIRGVTPNVTVKARRVGGSTYQVPIEIRSTQGKALAIRWSLGASRKRPPGRNMAFKLSYELMDAARENGNAIRKKEETHRMAEANRAFAHFR.

It belongs to the universal ribosomal protein uS7 family. As to quaternary structure, part of the 30S ribosomal subunit.

The protein localises to the plastid. The protein resides in the chloroplast. Its function is as follows. One of the primary rRNA binding proteins, it binds directly to 16S rRNA where it nucleates assembly of the head domain of the 30S subunit. This Zamia furfuracea (Cardboard cycad) protein is Small ribosomal subunit protein uS7c (rps7).